Here is a 77-residue protein sequence, read N- to C-terminus: Conotoxin ArMSGL-0143 (77 aa).

An N-terminal signal peptide occupies residues 1-22 (MSGLGIMLLTLLLLVFMETSHQ). A propeptide spanning residues 23 to 44 (DAGEKQATQRDAINVRRRRSLT) is cleaved from the precursor. Cystine bridges form between Cys-51–Cys-63, Cys-55–Cys-71, and Cys-62–Cys-75. Phe-76 is modified (phenylalanine amide).

Belongs to the conotoxin O3 superfamily. As to expression, expressed by the venom duct.

It is found in the secreted. The chain is Conotoxin ArMSGL-0143 from Conus arenatus (Sand-dusted cone).